The following is a 210-amino-acid chain: Histidine biosynthesis bifunctional protein HisIE (210 aa).

The interval 1-106 (MTKYKIDFSK…SCFNTEVPFS (106 aa)) is phosphoribosyl-AMP cyclohydrolase. Residues 107 to 210 (VQTLAQTVQD…KGERQNIEQW (104 aa)) form a phosphoribosyl-ATP pyrophosphohydrolase region.

It in the N-terminal section; belongs to the PRA-CH family. This sequence in the C-terminal section; belongs to the PRA-PH family.

Its subcellular location is the cytoplasm. It catalyses the reaction 1-(5-phospho-beta-D-ribosyl)-ATP + H2O = 1-(5-phospho-beta-D-ribosyl)-5'-AMP + diphosphate + H(+). The catalysed reaction is 1-(5-phospho-beta-D-ribosyl)-5'-AMP + H2O = 1-(5-phospho-beta-D-ribosyl)-5-[(5-phospho-beta-D-ribosylamino)methylideneamino]imidazole-4-carboxamide. It functions in the pathway amino-acid biosynthesis; L-histidine biosynthesis; L-histidine from 5-phospho-alpha-D-ribose 1-diphosphate: step 2/9. Its pathway is amino-acid biosynthesis; L-histidine biosynthesis; L-histidine from 5-phospho-alpha-D-ribose 1-diphosphate: step 3/9. This is Histidine biosynthesis bifunctional protein HisIE (hisI) from Staphylococcus aureus (strain Mu50 / ATCC 700699).